The chain runs to 887 residues: Protein PTHB1 (887 aa).

The segment at 1–407 is seven-bladed beta-propeller; the sequence is MSLFKARDWW…SQGVWPMTER (407 aa). The segment at 685-765 is interaction with LZTL1; the sequence is KDKTPAPLQH…FLPLQEDTQE (81 aa). The interval 850 to 887 is disordered; it reads DLEERSVEQDSTELFTNHRHLTAETPRPEVSPLQGVSE.

In terms of assembly, part of BBSome complex, that contains BBS1, BBS2, BBS4, BBS5, BBS7, BBS8/TTC8, BBS9 and BBIP10. Interacts with LZTL1; the interaction mediates the association of LZTL1 with the BBsome complex and regulates BBSome ciliary trafficking. Widely expressed. Expressed in adult heart, skeletal muscle, lung, liver, kidney, placenta and brain, and in fetal kidney, lung, liver and brain.

The protein resides in the cytoplasm. It is found in the cytoskeleton. The protein localises to the microtubule organizing center. Its subcellular location is the centrosome. It localises to the cell projection. The protein resides in the cilium membrane. It is found in the centriolar satellite. Functionally, the BBSome complex is thought to function as a coat complex required for sorting of specific membrane proteins to the primary cilia. The BBSome complex is required for ciliogenesis but is dispensable for centriolar satellite function. This ciliogenic function is mediated in part by the Rab8 GDP/GTP exchange factor, which localizes to the basal body and contacts the BBSome. Rab8(GTP) enters the primary cilium and promotes extension of the ciliary membrane. Firstly the BBSome associates with the ciliary membrane and binds to RAB3IP/Rabin8, the guanosyl exchange factor (GEF) for Rab8 and then the Rab8-GTP localizes to the cilium and promotes docking and fusion of carrier vesicles to the base of the ciliary membrane. Required for proper BBSome complex assembly and its ciliary localization. The sequence is that of Protein PTHB1 (BBS9) from Homo sapiens (Human).